The chain runs to 310 residues: Porphobilinogen deaminase (310 aa).

At Cys-242 the chain carries S-(dipyrrolylmethanemethyl)cysteine.

The protein belongs to the HMBS family. Monomer. Dipyrromethane serves as cofactor.

The catalysed reaction is 4 porphobilinogen + H2O = hydroxymethylbilane + 4 NH4(+). The protein operates within porphyrin-containing compound metabolism; protoporphyrin-IX biosynthesis; coproporphyrinogen-III from 5-aminolevulinate: step 2/4. Its function is as follows. Tetrapolymerization of the monopyrrole PBG into the hydroxymethylbilane pre-uroporphyrinogen in several discrete steps. The sequence is that of Porphobilinogen deaminase from Halorhodospira halophila (strain DSM 244 / SL1) (Ectothiorhodospira halophila (strain DSM 244 / SL1)).